Here is a 199-residue protein sequence, read N- to C-terminus: Peroxiredoxin-2 (199 aa).

Positions 7–165 (AHVGKPAPEF…ALRLVQAFQY (159 aa)) constitute a Thioredoxin domain. The active-site Cysteine sulfenic acid (-SOH) intermediate is Cys-52. Ser-113 bears the Phosphoserine mark. A Phosphothreonine modification is found at Thr-183. N6-acetyllysine is present on Lys-197.

This sequence belongs to the peroxiredoxin family. AhpC/Prx1 subfamily. In terms of assembly, homodimer; disulfide-linked, upon oxidation. 5 homodimers assemble to form a ring-like decamer. Interacts with TIPIN. The enzyme can be inactivated by further oxidation of the cysteine sulfenic acid (C(P)-SOH) to sulphinic acid (C(P)-SO2H) instead of its condensation to a disulfide bond. It can be reactivated by forming a transient disulfide bond with sulfiredoxin SRXN1, which reduces the cysteine sulfinic acid in an ATP- and Mg-dependent manner. In terms of processing, acetylation increases resistance to transition to high molecular-mass complexes. Deacetylated by HDAC6 which decreases reducing activity.

The protein resides in the cytoplasm. It carries out the reaction a hydroperoxide + [thioredoxin]-dithiol = an alcohol + [thioredoxin]-disulfide + H2O. Functionally, thiol-specific peroxidase that catalyzes the reduction of hydrogen peroxide and organic hydroperoxides to water and alcohols, respectively. Plays a role in cell protection against oxidative stress by detoxifying peroxides and as sensor of hydrogen peroxide-mediated signaling events. Might participate in the signaling cascades of growth factors and tumor necrosis factor-alpha by regulating the intracellular concentrations of H(2)O(2). In Bos taurus (Bovine), this protein is Peroxiredoxin-2 (PRDX2).